The primary structure comprises 424 residues: Serine--tRNA ligase (424 aa).

An L-serine-binding site is contributed by 230-232 (TAE). 261-263 (RSE) contacts ATP. Glu284 is a binding site for L-serine. ATP is bound at residue 348-351 (EISS). Ser384 contacts L-serine.

The protein belongs to the class-II aminoacyl-tRNA synthetase family. Type-1 seryl-tRNA synthetase subfamily. In terms of assembly, homodimer. The tRNA molecule binds across the dimer.

The protein localises to the cytoplasm. It carries out the reaction tRNA(Ser) + L-serine + ATP = L-seryl-tRNA(Ser) + AMP + diphosphate + H(+). The enzyme catalyses tRNA(Sec) + L-serine + ATP = L-seryl-tRNA(Sec) + AMP + diphosphate + H(+). It functions in the pathway aminoacyl-tRNA biosynthesis; selenocysteinyl-tRNA(Sec) biosynthesis; L-seryl-tRNA(Sec) from L-serine and tRNA(Sec): step 1/1. Functionally, catalyzes the attachment of serine to tRNA(Ser). Is also able to aminoacylate tRNA(Sec) with serine, to form the misacylated tRNA L-seryl-tRNA(Sec), which will be further converted into selenocysteinyl-tRNA(Sec). This chain is Serine--tRNA ligase, found in Streptococcus pneumoniae (strain JJA).